Reading from the N-terminus, the 489-residue chain is Cryptochrome DASH (489 aa).

The region spanning 6 to 140 is the Photolyase/cryptochrome alpha/beta domain; the sequence is PTVLVWFRND…EAKGYWGSTL (135 aa).

This sequence belongs to the DNA photolyase class-1 family. FAD is required as a cofactor. The cofactor is (6R)-5,10-methylene-5,6,7,8-tetrahydrofolate.

Functionally, may have a photoreceptor function. Binds DNA; represses transcription of at least 8 genes, including slr0364 and slr1866. Does not encode a DNA photolyase function. Its disruption does not affect circadian rhythm. The chain is Cryptochrome DASH (cry) from Synechocystis sp. (strain ATCC 27184 / PCC 6803 / Kazusa).